A 267-amino-acid polypeptide reads, in one-letter code: Phosphate import ATP-binding protein PstB 2 (267 aa).

The region spanning 21–262 (LATKDLHVYY…AQCQSTNDYV (242 aa)) is the ABC transporter domain. ATP is bound at residue 53–60 (GPSGCGKS).

This sequence belongs to the ABC transporter superfamily. Phosphate importer (TC 3.A.1.7) family. As to quaternary structure, the complex is composed of two ATP-binding proteins (PstB), two transmembrane proteins (PstC and PstA) and a solute-binding protein (PstS).

The protein resides in the cell membrane. The enzyme catalyses phosphate(out) + ATP + H2O = ADP + 2 phosphate(in) + H(+). Part of the ABC transporter complex PstSACB involved in phosphate import. Responsible for energy coupling to the transport system. In Streptococcus pyogenes serotype M18 (strain MGAS8232), this protein is Phosphate import ATP-binding protein PstB 2.